We begin with the raw amino-acid sequence, 315 residues long: Homoserine kinase (315 aa).

97-107 (PPARGLGSSAT) serves as a coordination point for ATP.

The protein belongs to the GHMP kinase family. Homoserine kinase subfamily.

The protein resides in the cytoplasm. It carries out the reaction L-homoserine + ATP = O-phospho-L-homoserine + ADP + H(+). It participates in amino-acid biosynthesis; L-threonine biosynthesis; L-threonine from L-aspartate: step 4/5. Functionally, catalyzes the ATP-dependent phosphorylation of L-homoserine to L-homoserine phosphate. The chain is Homoserine kinase from Prochlorococcus marinus (strain MIT 9515).